Reading from the N-terminus, the 521-residue chain is GMP synthase [glutamine-hydrolyzing] (521 aa).

Residues 10–204 form the Glutamine amidotransferase type-1 domain; it reads SLLILDFGSQ…ALGICGCEND (195 aa). The active-site Nucleophile is the Cys87. Residues His178 and Glu180 contribute to the active site. The GMPS ATP-PPase domain occupies 205-396; sequence WNMHNFAEEQ…LGMPREMLMR (192 aa). Residue 232 to 238 coordinates ATP; it reads SGGVDSS.

As to quaternary structure, homodimer.

The catalysed reaction is XMP + L-glutamine + ATP + H2O = GMP + L-glutamate + AMP + diphosphate + 2 H(+). It participates in purine metabolism; GMP biosynthesis; GMP from XMP (L-Gln route): step 1/1. Catalyzes the synthesis of GMP from XMP. This Wolinella succinogenes (strain ATCC 29543 / DSM 1740 / CCUG 13145 / JCM 31913 / LMG 7466 / NCTC 11488 / FDC 602W) (Vibrio succinogenes) protein is GMP synthase [glutamine-hydrolyzing].